An 829-amino-acid chain; its full sequence is Periplasmic nitrate reductase (829 aa).

Residues 1–30 constitute a signal peptide (tat-type signal); it reads MKLSRRDFMKANAVAAAAAVAGVSAPTLAA. One can recognise a 4Fe-4S Mo/W bis-MGD-type domain in the interval 41 to 97; the sequence is ITWDKAPCRFCGTGCSVLVGSQDGRVVATQGDPDAPVNRGLNCIKGYFLSKIMYGQD. The [4Fe-4S] cluster site is built by C48, C51, C55, and C83. Mo-bis(molybdopterin guanine dinucleotide)-binding positions include K85, Q152, N177, C181, 214–221, 245–249, 264–266, M374, Q378, N484, 510–511, K533, D560, and 719–728; these read WGSNMAEM, STFEH, QTD, SD, and TGRVLEHWHT. A substrate-binding site is contributed by F795. Positions 803 and 820 each coordinate Mo-bis(molybdopterin guanine dinucleotide).

It belongs to the prokaryotic molybdopterin-containing oxidoreductase family. NasA/NapA/NarB subfamily. Component of the periplasmic nitrate reductase NapAB complex composed of NapA and NapB. It depends on [4Fe-4S] cluster as a cofactor. Requires Mo-bis(molybdopterin guanine dinucleotide) as cofactor. Predicted to be exported by the Tat system. The position of the signal peptide cleavage has not been experimentally proven.

It localises to the periplasm. It carries out the reaction 2 Fe(II)-[cytochrome] + nitrate + 2 H(+) = 2 Fe(III)-[cytochrome] + nitrite + H2O. Catalytic subunit of the periplasmic nitrate reductase complex NapAB. Receives electrons from NapB and catalyzes the reduction of nitrate to nitrite. The sequence is that of Periplasmic nitrate reductase from Aeromonas hydrophila subsp. hydrophila (strain ATCC 7966 / DSM 30187 / BCRC 13018 / CCUG 14551 / JCM 1027 / KCTC 2358 / NCIMB 9240 / NCTC 8049).